Reading from the N-terminus, the 722-residue chain is MPLQTFLFEIGTEELPADFVRSAITQWQGLIPPGLAAEFLQPESVEIYGTPRRLAVLIKGLPECQPDRLEEIKGPPASAAFKDGQPTPAALGFAKKQGVNPEDFEIRSTPKGDFIFVNKQLQGQASRDLLPKLALSWLKALDGRRFMRWGDGDWRFPRPIRWLVCLLDDQVLPLQIDNGSTTLVGDRLSRGHRILHPADVSLEHGQNYLAQLKTAGVVVDPQERRAMIEQQITTQAATLEGEAIIYEDLLDEVEQLVEYPTAVLGKFDQEFLSLPREVTTTVMVTHQRYFPVVDKDGRLLPHFITIANGDPSKGDIIAAGNGRVIRARLADAKFFYQADCDDSLDSYLPQLETVTFQEELGTMRDKVDRIMEMAAAIADQLGVTEQQRGEIDSTAMLCKADLVTQMVYEFPELQGIMGEKYALVSGESAAVAQGIVEHYLPRHQDDDLPQGLPGQVVGMADRLDTLVSIFGLGLLPTGSSDPFALRRAANAVINVAWAASLEINLLELLTQGCRDFVTSHPDKTSPLQALKTFFLQRLQTLLQDEQGIDYDLVNAVLGNGETNCDEAQSRLHDRLLADLQDVKERAQYLQELRDNGHLDAIYPTVNRSAKLASKGTLPTDQLDPRPVIQAPQLVQDSEKAVYQALLAIYPKAVEVQESRDYETLVNALHELAPTVAEFFDGPDSVLVMAENDELRQNRLNLLGLIRNYALILGDFGAIVKGI.

The protein belongs to the class-II aminoacyl-tRNA synthetase family. Tetramer of two alpha and two beta subunits.

The protein localises to the cytoplasm. The catalysed reaction is tRNA(Gly) + glycine + ATP = glycyl-tRNA(Gly) + AMP + diphosphate. This chain is Glycine--tRNA ligase beta subunit (glyS), found in Synechocystis sp. (strain ATCC 27184 / PCC 6803 / Kazusa).